Reading from the N-terminus, the 109-residue chain is MLEAISSTAISAGQAASRATETQAIAPAAPTAIQSGGDVGFDSVMKQVTTDAIGTLKAGEAASISAMQGKESTRRVVEALMSAEQALQTAVAVRDKVVQAYQEVVRMSI.

This sequence belongs to the FliE family.

It is found in the bacterial flagellum basal body. This Bradyrhizobium diazoefficiens (strain JCM 10833 / BCRC 13528 / IAM 13628 / NBRC 14792 / USDA 110) protein is Flagellar hook-basal body complex protein FliE 2 (fliE2).